The chain runs to 448 residues: Phosphoglucosamine mutase (448 aa).

The active-site Phosphoserine intermediate is the serine 99. Residues serine 99, aspartate 239, aspartate 241, and aspartate 243 each contribute to the Mg(2+) site. At serine 99 the chain carries Phosphoserine.

It belongs to the phosphohexose mutase family. Mg(2+) is required as a cofactor. In terms of processing, activated by phosphorylation.

It catalyses the reaction alpha-D-glucosamine 1-phosphate = D-glucosamine 6-phosphate. In terms of biological role, catalyzes the conversion of glucosamine-6-phosphate to glucosamine-1-phosphate. This chain is Phosphoglucosamine mutase, found in Lachnoclostridium phytofermentans (strain ATCC 700394 / DSM 18823 / ISDg) (Clostridium phytofermentans).